The following is a 192-amino-acid chain: I-Kappa-B like protein H1 (192 aa).

ANK repeat units follow at residues 94-126 (KGAQ…DING), 131-161 (AGLT…DVKV), and 165-192 (GKET…SKKM).

Belongs to the polydnaviridae I-Kappa-B-like protein family.

Suppresses the host immune response through NF-kappa-B inactivation. Possesses ankyrin repeat domains required for NF-kappa-B binding but lacks the regulatory regions required for dissociation from NF-kappa-B and degradation. Therefore, prevents host NF-kappa-B release and subsequent activation. This chain is I-Kappa-B like protein H1 (H4), found in Microplitis demolitor bracovirus (isolate Webb) (MdBV).